The sequence spans 480 residues: uncharacterized protein (480 aa).

Lys-222 carries the N6-(pyridoxal phosphate)lysine modification.

This sequence belongs to the Orn/Lys/Arg decarboxylase class-I family. Requires pyridoxal 5'-phosphate as cofactor.

This is an uncharacterized protein from Bacillus subtilis (strain 168).